We begin with the raw amino-acid sequence, 459 residues long: Mitochondrial distribution and morphology protein 10 (459 aa).

It belongs to the MDM10 family. In terms of assembly, component of the ER-mitochondria encounter structure (ERMES) or MDM complex, composed of mmm1, mdm10, mdm12 and mdm34. Associates with the mitochondrial outer membrane sorting assembly machinery SAM(core) complex.

The protein resides in the mitochondrion outer membrane. Component of the ERMES/MDM complex, which serves as a molecular tether to connect the endoplasmic reticulum and mitochondria. Components of this complex are involved in the control of mitochondrial shape and protein biogenesis and may function in phospholipid exchange. mdm10 is involved in the late assembly steps of the general translocase of the mitochondrial outer membrane (TOM complex). Functions in the tom40-specific route of the assembly of outer membrane beta-barrel proteins, including the association of tom40 with the receptor tom22 and small TOM proteins. Can associate with the SAM(core) complex as well as the mdm12-mmm1 complex, both involved in late steps of the major beta-barrel assembly pathway, that is responsible for biogenesis of all outer membrane beta-barrel proteins. May act as a switch that shuttles between both complexes and channels precursor proteins into the tom40-specific pathway. Plays a role in mitochondrial morphology and in the inheritance of mitochondria. In Aspergillus terreus (strain NIH 2624 / FGSC A1156), this protein is Mitochondrial distribution and morphology protein 10 (mdmB).